The following is a 73-amino-acid chain: MRKDIHPEYHKINAVCACGNEVELGSVETEMKVEICSACHPFFTGKQKLIDTAGRIEKFKQRYAKHFEKKAEA.

Cysteine 16, cysteine 18, cysteine 36, and cysteine 39 together coordinate Zn(2+).

This sequence belongs to the bacterial ribosomal protein bL31 family. Type A subfamily. In terms of assembly, part of the 50S ribosomal subunit. The cofactor is Zn(2+).

Its function is as follows. Binds the 23S rRNA. This is Large ribosomal subunit protein bL31 from Desulfotalea psychrophila (strain LSv54 / DSM 12343).